The sequence spans 1478 residues: FYVE and coiled-coil domain-containing protein 1 (1478 aa).

Position 2 is an N-acetylalanine (A2). Residues 4–33 (TNAESQLQRIIRDLQDAVTELSKEFQEAGE) adopt a coiled-coil conformation. In terms of domain architecture, RUN spans 36 to 169 (TDDSTSLHKF…VQFDLASRGF (134 aa)). S196 is subject to Phosphoserine. Residues 225 to 280 (NNEALEGFDEMRLELDQLEVREKQLRERMQQLDRENQELRAAVSQQGEQLQTERER) are a coiled coil. Position 342 is a phosphoserine (S342). Position 381 is a phosphothreonine (T381). Coiled-coil stretches lie at residues 394–555 (SDAA…MLER) and 596–1151 (QEAQ…KDAL). The disordered stretch occupies residues 586–613 (GKPEEEQRGLQEAQLDDTKVQEGSQEEE). S878 carries the phosphoserine modification. The FYVE-type zinc-finger motif lies at 1173-1231 (DTEANHCLDCKREFSWMVRRHHCRICGRIFCYYCCNNYVLSKHGGKKERCCRACFQKLS). Zn(2+) contacts are provided by C1179, C1182, C1195, C1198, C1203, C1206, C1223, and C1226. A compositionally biased stretch (low complexity) spans 1231–1261 (SEGPGSPDSSGSGTSQGEPSPALSPASPGPQ). Disordered regions lie at residues 1231 to 1277 (SEGP…PPDD) and 1294 to 1332 (SGSS…DMPV). Polar residues-rich tracts occupy residues 1294–1305 (SGSSLPETPTET) and 1314–1324 (EQDTTSTSLTP). One can recognise a GOLD domain in the interval 1337–1466 (EICLLKSGEL…SKKVFYHLTV (130 aa)).

Can form homodimers. Interacts (via C-terminus) with MAP1LC3B. Interacts with RAB7A; the interaction with RAB7A induces FYCO1 recruitment to late endosomal/lysosomal compartments. Interacts with MAP1LC3B. In terms of tissue distribution, expressed in heart and skeletal muscle.

It is found in the cytoplasmic vesicle. The protein resides in the autophagosome. The protein localises to the endosome. It localises to the lysosome. Functionally, may mediate microtubule plus end-directed vesicle transport. The protein is FYVE and coiled-coil domain-containing protein 1 (FYCO1) of Homo sapiens (Human).